The chain runs to 206 residues: Large ribosomal subunit protein uL4 (206 aa).

Belongs to the universal ribosomal protein uL4 family. As to quaternary structure, part of the 50S ribosomal subunit.

Its function is as follows. One of the primary rRNA binding proteins, this protein initially binds near the 5'-end of the 23S rRNA. It is important during the early stages of 50S assembly. It makes multiple contacts with different domains of the 23S rRNA in the assembled 50S subunit and ribosome. Functionally, forms part of the polypeptide exit tunnel. This is Large ribosomal subunit protein uL4 from Jannaschia sp. (strain CCS1).